The chain runs to 806 residues: Leucine--tRNA ligase (806 aa).

The 'HIGH' region motif lies at 54 to 64 (SYPSGDLHMGH). The short motif at 571–575 (KMSKS) is the 'KMSKS' region element. An ATP-binding site is contributed by K574.

The protein belongs to the class-I aminoacyl-tRNA synthetase family.

Its subcellular location is the cytoplasm. It catalyses the reaction tRNA(Leu) + L-leucine + ATP = L-leucyl-tRNA(Leu) + AMP + diphosphate. The sequence is that of Leucine--tRNA ligase from Tropheryma whipplei (strain TW08/27) (Whipple's bacillus).